The primary structure comprises 63 residues: MANLCEICGKGNNSGASVSHSNKKTKRKWKGNIQKLKAMVDGRPKKVKVCTQCIKAGKIERAF.

Polar residues predominate over residues 11–20; it reads GNNSGASVSH. Residues 11-30 form a disordered region; the sequence is GNNSGASVSHSNKKTKRKWK. Positions 21–30 are enriched in basic residues; it reads SNKKTKRKWK.

The protein belongs to the bacterial ribosomal protein bL28 family.

This Natranaerobius thermophilus (strain ATCC BAA-1301 / DSM 18059 / JW/NM-WN-LF) protein is Large ribosomal subunit protein bL28.